The following is a 242-amino-acid chain: Glucosamine-6-phosphate deaminase (242 aa).

Asp-67 functions as the Proton acceptor; for enolization step in the catalytic mechanism. Asn-137 functions as the For ring-opening step in the catalytic mechanism. Residue His-139 is the Proton acceptor; for ring-opening step of the active site. The For ring-opening step role is filled by Glu-144.

Belongs to the glucosamine/galactosamine-6-phosphate isomerase family. NagB subfamily.

The catalysed reaction is alpha-D-glucosamine 6-phosphate + H2O = beta-D-fructose 6-phosphate + NH4(+). The protein operates within amino-sugar metabolism; N-acetylneuraminate degradation; D-fructose 6-phosphate from N-acetylneuraminate: step 5/5. In terms of biological role, catalyzes the reversible isomerization-deamination of glucosamine 6-phosphate (GlcN6P) to form fructose 6-phosphate (Fru6P) and ammonium ion. This is Glucosamine-6-phosphate deaminase from Staphylococcus haemolyticus (strain JCSC1435).